Here is a 206-residue protein sequence, read N- to C-terminus: Proteasome subunit beta 2 (206 aa).

Positions Met-1–Gly-10 are cleaved as a propeptide — removed in mature form; by autocatalysis. Catalysis depends on Thr-11, which acts as the Nucleophile.

Belongs to the peptidase T1B family. As to quaternary structure, the 20S proteasome core is composed of 14 alpha and 14 beta subunits that assemble into four stacked heptameric rings, resulting in a barrel-shaped structure. The two inner rings, each composed of seven catalytic beta subunits, are sandwiched by two outer rings, each composed of seven alpha subunits. The catalytic chamber with the active sites is on the inside of the barrel. Has a gated structure, the ends of the cylinder being occluded by the N-termini of the alpha-subunits. Is capped at one or both ends by the proteasome regulatory ATPase, PAN.

It is found in the cytoplasm. The catalysed reaction is Cleavage of peptide bonds with very broad specificity.. With respect to regulation, the formation of the proteasomal ATPase PAN-20S proteasome complex, via the docking of the C-termini of PAN into the intersubunit pockets in the alpha-rings, triggers opening of the gate for substrate entry. Interconversion between the open-gate and close-gate conformations leads to a dynamic regulation of the 20S proteasome proteolysis activity. Its function is as follows. Component of the proteasome core, a large protease complex with broad specificity involved in protein degradation. This chain is Proteasome subunit beta 2, found in Pyrococcus furiosus (strain ATCC 43587 / DSM 3638 / JCM 8422 / Vc1).